Reading from the N-terminus, the 382-residue chain is Homoserine O-acetyltransferase (382 aa).

Residues 1–20 (MSTDQSPCPSATGAELLPPP) are disordered. An AB hydrolase-1 domain is found at 59-363 (NVVLVEHALT…RDGHDGFLTE (305 aa)). S164 functions as the Nucleophile in the catalytic mechanism. R234 serves as a coordination point for substrate. Catalysis depends on residues D327 and H357. D358 contributes to the substrate binding site.

It belongs to the AB hydrolase superfamily. MetX family. In terms of assembly, homodimer.

It is found in the cytoplasm. It carries out the reaction L-homoserine + acetyl-CoA = O-acetyl-L-homoserine + CoA. Its pathway is amino-acid biosynthesis; L-methionine biosynthesis via de novo pathway; O-acetyl-L-homoserine from L-homoserine: step 1/1. Transfers an acetyl group from acetyl-CoA to L-homoserine, forming acetyl-L-homoserine. The protein is Homoserine O-acetyltransferase of Nocardia farcinica (strain IFM 10152).